We begin with the raw amino-acid sequence, 120 residues long: NAD(P)H-quinone oxidoreductase subunit 3, chloroplastic (120 aa).

3 consecutive transmembrane segments (helical) span residues 9 to 29 (IFWA…LISA), 64 to 84 (MFAL…PWAM), and 88 to 108 (VLGV…IVGL).

Belongs to the complex I subunit 3 family. NDH is composed of at least 16 different subunits, 5 of which are encoded in the nucleus.

The protein resides in the plastid. Its subcellular location is the chloroplast thylakoid membrane. The enzyme catalyses a plastoquinone + NADH + (n+1) H(+)(in) = a plastoquinol + NAD(+) + n H(+)(out). It carries out the reaction a plastoquinone + NADPH + (n+1) H(+)(in) = a plastoquinol + NADP(+) + n H(+)(out). Its function is as follows. NDH shuttles electrons from NAD(P)H:plastoquinone, via FMN and iron-sulfur (Fe-S) centers, to quinones in the photosynthetic chain and possibly in a chloroplast respiratory chain. The immediate electron acceptor for the enzyme in this species is believed to be plastoquinone. Couples the redox reaction to proton translocation, and thus conserves the redox energy in a proton gradient. This chain is NAD(P)H-quinone oxidoreductase subunit 3, chloroplastic, found in Citrus sinensis (Sweet orange).